A 301-amino-acid polypeptide reads, in one-letter code: Heme A synthase (301 aa).

Topologically, residues 1–7 are cytoplasmic; that stretch reads MHKGLKR. Residues 8 to 28 traverse the membrane as a helical segment; the sequence is LGVITSLGVLLVLIQGALVTN. At 29–56 the chain is on the extracellular side; the sequence is TGSGEGCGQTWPLCFGQVIPLDPPPETV. A disulfide bridge connects residues C35 and C42. A helical membrane pass occupies residues 57–77; the sequence is IEFSHRLVAGIVGMLVILMAI. Residue E58 is part of the active site. H61 contacts heme o. Topologically, residues 78–92 are cytoplasmic; sequence WSWRRLKHMPETRFL. Residues 93-113 form a helical membrane-spanning segment; it reads AVISVFMIIFQGLLGAGAVVF. The Extracellular segment spans residues 114 to 117; it reads GQSD. The helical transmembrane segment at 118 to 138 threads the bilayer; the sequence is LIMALHFGFSALSFASVVLLT. Residue H123 coordinates heme o. Topologically, residues 139-159 are cytoplasmic; the sequence is RLAFEDSNPQKQYAPIVSKAY. The chain crosses the membrane as a helical span at residues 160 to 180; that stretch reads KGYVIFVAIYSYVAIYTGAYV. The Extracellular segment spans residues 181–215; the sequence is KHTNATLACSGFPLCNGQWVPDVFTEAIGVQLLHR. Cysteines 189 and 195 form a disulfide. Heme b is bound at residue H214. Residues 216–236 form a helical membrane-spanning segment; the sequence is SAAILLSLLLLVLFIWTVKTF. The Cytoplasmic portion of the chain corresponds to 237–240; the sequence is RASR. The chain crosses the membrane as a helical span at residues 241 to 261; that stretch reads VLVVCASLAMLLVIGQAASGV. At 262-274 the chain is on the extracellular side; the sequence is AVVLTYNATLTLG. Residues 275–295 traverse the membrane as a helical segment; the sequence is IFHALLISLLFTLLCYMVMLV. Heme b is bound at residue H277. The Cytoplasmic segment spans residues 296 to 301; that stretch reads TRHKAK.

The protein belongs to the COX15/CtaA family. Type 1 subfamily. Interacts with CtaB. It depends on heme b as a cofactor.

The protein localises to the cell membrane. The enzyme catalyses Fe(II)-heme o + 2 A + H2O = Fe(II)-heme a + 2 AH2. The protein operates within porphyrin-containing compound metabolism; heme A biosynthesis; heme A from heme O: step 1/1. Functionally, catalyzes the conversion of heme O to heme A by two successive hydroxylations of the methyl group at C8. The first hydroxylation forms heme I, the second hydroxylation results in an unstable dihydroxymethyl group, which spontaneously dehydrates, resulting in the formyl group of heme A. In Shouchella clausii (strain KSM-K16) (Alkalihalobacillus clausii), this protein is Heme A synthase.